The primary structure comprises 498 residues: MVGRLKESPSQEMIDLLFKPSIRSDLKHHYSYLLKINSVHLFMLKSEGIISDEAASKIHSVLTHLQVTGKEALSINPALEDLYFNVEAYIIEQTGPEIGGQMHTGRSRNDILATVTRMRIREEMLEIYELVCTLRRTLIDLATEHTSTLMTGYTHLQPAEPITFAHYLSALLHGFERDFTRLYNCYAHINKSPLGSCALASTTFSINRKFTMELLGFADLLENSLDGIASRDYALEALSALSIFSNSLSRFAQDLYTWCSYEFGYLEVGHSVAVISSIMPQKKNPVTLEHIKAKAGHIQGALVSSLSVLKNTLYSHSRDTSMESMKYTWEAINETKAAIRLMIKTLQTLTVHKDNMAATTRQNFSTVTELANALVRHYHFSFRTAHHIVAEIVNETLNQGLGSDKIEASTVERAIKQVTAKTVSVTKEFVEQALDPERNISLRTVRGGSAPVEVARQLQQLEQTLASDHQKISDLKQALQSADQLYKHYAAELERGAQ.

The protein belongs to the lyase 1 family. Argininosuccinate lyase subfamily.

The protein resides in the cytoplasm. The catalysed reaction is 2-(N(omega)-L-arginino)succinate = fumarate + L-arginine. It participates in amino-acid biosynthesis; L-arginine biosynthesis; L-arginine from L-ornithine and carbamoyl phosphate: step 3/3. The polypeptide is Argininosuccinate lyase 1 (Shouchella clausii (strain KSM-K16) (Alkalihalobacillus clausii)).